The sequence spans 1287 residues: DENN domain-containing protein 5A (1287 aa).

Positions 57-259 constitute a uDENN domain; sequence STTEGENFEQ…EVPLPPPGRS (203 aa). Ser-193 bears the Phosphoserine mark. The cDENN domain maps to 278–414; it reads ELPLFDFPVK…LEFVQEVSEI (137 aa). In terms of domain architecture, dDENN spans 416–598; the sequence is MAFGVPPEGN…IMCHDDDDKD (183 aa). The RUN 1 domain maps to 787–950; sequence VEENTLIASL…DYFCFTNVFT (164 aa). The region spanning 954 to 1062 is the PLAT domain; sequence IPYHILIVPS…DDGSLERVLV (109 aa). The residue at position 1079 (Thr-1079) is a Phosphothreonine. Phosphoserine is present on residues Ser-1085, Ser-1087, and Ser-1096. Residues 1134-1280 form the RUN 2 domain; the sequence is TLLLCGECGL…QEFNITLDTS (147 aa).

The protein belongs to the RAB6IP1 family. Interacts with RAB6A bound to GTP. In terms of tissue distribution, expressed in developing brain and developing neurons.

It is found in the golgi apparatus membrane. In terms of biological role, guanine nucleotide exchange factor (GEF) which may activate RAB6A and RAB39A and/or RAB39B. Promotes the exchange of GDP to GTP, converting inactive GDP-bound Rab proteins into their active GTP-bound form. Involved in the negative regulation of neurite outgrowth. This is DENN domain-containing protein 5A (Dennd5a) from Rattus norvegicus (Rat).